Here is a 332-residue protein sequence, read N- to C-terminus: tRNA-dihydrouridine synthase B (332 aa).

Residues 16–18 and glutamine 70 contribute to the FMN site; that span reads PMA. Cysteine 100 (proton donor) is an active-site residue. Residues lysine 139, 200-202, and 224-225 each bind FMN; these read NGD and GR.

It belongs to the Dus family. DusB subfamily. It depends on FMN as a cofactor.

The enzyme catalyses a 5,6-dihydrouridine in tRNA + NAD(+) = a uridine in tRNA + NADH + H(+). It carries out the reaction a 5,6-dihydrouridine in tRNA + NADP(+) = a uridine in tRNA + NADPH + H(+). In terms of biological role, catalyzes the synthesis of 5,6-dihydrouridine (D), a modified base found in the D-loop of most tRNAs, via the reduction of the C5-C6 double bond in target uridines. The polypeptide is tRNA-dihydrouridine synthase B (Xanthomonas axonopodis pv. citri (strain 306)).